Here is a 248-residue protein sequence, read N- to C-terminus: Aspartate/glutamate leucyltransferase (248 aa).

This sequence belongs to the R-transferase family. Bpt subfamily.

It is found in the cytoplasm. The enzyme catalyses N-terminal L-glutamyl-[protein] + L-leucyl-tRNA(Leu) = N-terminal L-leucyl-L-glutamyl-[protein] + tRNA(Leu) + H(+). It catalyses the reaction N-terminal L-aspartyl-[protein] + L-leucyl-tRNA(Leu) = N-terminal L-leucyl-L-aspartyl-[protein] + tRNA(Leu) + H(+). In terms of biological role, functions in the N-end rule pathway of protein degradation where it conjugates Leu from its aminoacyl-tRNA to the N-termini of proteins containing an N-terminal aspartate or glutamate. The sequence is that of Aspartate/glutamate leucyltransferase from Methylobacillus flagellatus (strain ATCC 51484 / DSM 6875 / VKM B-1610 / KT).